A 282-amino-acid chain; its full sequence is Hydrogenase expression/formation protein HoxQ (282 aa).

This sequence belongs to the HupH/HyaF family.

The sequence is that of Hydrogenase expression/formation protein HoxQ (hoxQ) from Cupriavidus necator (strain ATCC 17699 / DSM 428 / KCTC 22496 / NCIMB 10442 / H16 / Stanier 337) (Ralstonia eutropha).